Here is a 102-residue protein sequence, read N- to C-terminus: UPF0213 protein XAC3202 (102 aa).

One can recognise a GIY-YIG domain in the interval 5–80 (KPWHLYLLLC…KRLPRARKLA (76 aa)).

Belongs to the UPF0213 family.

The protein is UPF0213 protein XAC3202 of Xanthomonas axonopodis pv. citri (strain 306).